Here is a 288-residue protein sequence, read N- to C-terminus: Fructose-bisphosphate aldolase (288 aa).

S49 serves as a coordination point for D-glyceraldehyde 3-phosphate. Catalysis depends on D84, which acts as the Proton donor. Residues H85, D105, E135, and H177 each coordinate Zn(2+). G178 is a binding site for dihydroxyacetone phosphate. Residue H206 coordinates Zn(2+). Dihydroxyacetone phosphate is bound by residues 207–209 (GGS) and 228–231 (NINT).

This sequence belongs to the class II fructose-bisphosphate aldolase family. In terms of assembly, homodimer. Zn(2+) is required as a cofactor.

The enzyme catalyses beta-D-fructose 1,6-bisphosphate = D-glyceraldehyde 3-phosphate + dihydroxyacetone phosphate. Its pathway is carbohydrate degradation; glycolysis; D-glyceraldehyde 3-phosphate and glycerone phosphate from D-glucose: step 4/4. Functionally, catalyzes the aldol condensation of dihydroxyacetone phosphate (DHAP or glycerone-phosphate) with glyceraldehyde 3-phosphate (G3P) to form fructose 1,6-bisphosphate (FBP) in gluconeogenesis and the reverse reaction in glycolysis. In Mycoplasma pneumoniae (strain ATCC 29342 / M129 / Subtype 1) (Mycoplasmoides pneumoniae), this protein is Fructose-bisphosphate aldolase (fba).